The primary structure comprises 475 residues: Ribulose bisphosphate carboxylase large chain (475 aa).

A propeptide spanning residues 1–2 is cleaved from the precursor; it reads MS. Pro3 is subject to N-acetylproline. N6,N6,N6-trimethyllysine is present on Lys14. 2 residues coordinate substrate: Asn123 and Thr173. Lys175 functions as the Proton acceptor in the catalytic mechanism. Lys177 is a substrate binding site. Residues Lys201, Asp203, and Glu204 each contribute to the Mg(2+) site. Lys201 carries the post-translational modification N6-carboxylysine. The active-site Proton acceptor is His294. 3 residues coordinate substrate: Arg295, His327, and Ser379.

This sequence belongs to the RuBisCO large chain family. Type I subfamily. As to quaternary structure, heterohexadecamer of 8 large chains and 8 small chains; disulfide-linked. The disulfide link is formed within the large subunit homodimers. Mg(2+) serves as cofactor. In terms of processing, the disulfide bond which can form in the large chain dimeric partners within the hexadecamer appears to be associated with oxidative stress and protein turnover.

It localises to the plastid. It is found in the chloroplast. The catalysed reaction is 2 (2R)-3-phosphoglycerate + 2 H(+) = D-ribulose 1,5-bisphosphate + CO2 + H2O. It catalyses the reaction D-ribulose 1,5-bisphosphate + O2 = 2-phosphoglycolate + (2R)-3-phosphoglycerate + 2 H(+). RuBisCO catalyzes two reactions: the carboxylation of D-ribulose 1,5-bisphosphate, the primary event in carbon dioxide fixation, as well as the oxidative fragmentation of the pentose substrate in the photorespiration process. Both reactions occur simultaneously and in competition at the same active site. The protein is Ribulose bisphosphate carboxylase large chain of Oenothera argillicola (Appalachian evening primrose).